The following is a 504-amino-acid chain: UDP-GalNAc:beta-1,3-N-acetylgalactosaminyltransferase 2 (504 aa).

Residues 1–3 (MRN) are Cytoplasmic-facing. A helical; Signal-anchor for type II membrane protein transmembrane segment spans residues 4–24 (WLVLLCPCVLGAALHLWHLWL). Residues 25–504 (RSPPDPHNTG…DPCQCEAKVR (480 aa)) are Lumenal-facing. N-linked (GlcNAc...) asparagine glycosylation is found at Asn117 and Asn176.

This sequence belongs to the glycosyltransferase 31 family. Post-translationally, N-glycosylated. In terms of tissue distribution, present in testis (at protein level). In testis, it is mainly detected in the middle layers of seminiferous tubules at stages XII to II. Strongly expressed in primary and secondary spermatocytes and early round spermatids, but not in spermatogonia, elongating or elongated spermatids, or in Leydig or Sertoli cells.

The protein resides in the golgi apparatus membrane. It is found in the endoplasmic reticulum. It catalyses the reaction 3-O-(N-acetyl-beta-D-glucosaminyl-(1-&gt;4)-alpha-D-mannosyl)-L-threonyl-[protein] + UDP-N-acetyl-alpha-D-galactosamine = 3-O-[beta-D-GalNAc-(1-&gt;3)-beta-D-GlcNAc-(1-&gt;4)-alpha-D-Man]-L-Thr-[protein] + UDP + H(+). It functions in the pathway protein modification; protein glycosylation. Functionally, beta-1,3-N-acetylgalactosaminyltransferase that synthesizes a unique carbohydrate structure, GalNAc-beta-1-3GlcNAc, on N- and O-glycans. Has no galactose nor galactosaminyl transferase activity toward any acceptor substrate. Involved in alpha-dystroglycan (DAG1) glycosylation: acts coordinately with GTDC2/POMGnT2 to synthesize a GalNAc-beta3-GlcNAc-beta-terminus at the 4-position of protein O-mannose in the biosynthesis of the phosphorylated O-mannosyl trisaccharide (N-acetylgalactosamine-beta-3-N-acetylglucosamine-beta-4-(phosphate-6-)mannose), a carbohydrate structure present in alpha-dystroglycan, which is required for binding laminin G-like domain-containing extracellular proteins with high affinity. This chain is UDP-GalNAc:beta-1,3-N-acetylgalactosaminyltransferase 2 (B3galnt2), found in Mus musculus (Mouse).